The following is a 163-amino-acid chain: Succinate dehydrogenase assembly factor 2-B, mitochondrial (163 aa).

The N-terminal 23 residues, 1 to 23, are a transit peptide targeting the mitochondrion; that stretch reads MFRQLRLTMDISGWIFMPWRRSL.

It belongs to the SDHAF2 family. As to quaternary structure, interacts with the flavoprotein subunit within the SDH catalytic dimer.

It localises to the mitochondrion matrix. Plays an essential role in the assembly of succinate dehydrogenase (SDH), an enzyme complex (also referred to as respiratory complex II) that is a component of both the tricarboxylic acid (TCA) cycle and the mitochondrial electron transport chain, and which couples the oxidation of succinate to fumarate with the reduction of ubiquinone (coenzyme Q) to ubiquinol. Required for flavinylation (covalent attachment of FAD) of the flavoprotein subunit of the SDH catalytic dimer. The protein is Succinate dehydrogenase assembly factor 2-B, mitochondrial of Drosophila ananassae (Fruit fly).